The sequence spans 382 residues: MSNATNNTLGSLLPQLEAAANSNSLYGGMVPNLRFNITMIVIWGILLTIHVVQLLMRQYWFSIAFICTGILEVLGFIGRTWSHSNVADMDAFLLNMICLTIAPVFTMGGIYYQLAKLIEVYGHRFSLLPSPMAYSFIFICSDIVSLVVQAVGGGLCGVAVTDGTSTTTGNHVFIAGLAIQVASMAIFLMLWFHFLFRIYISVRWEHINSRPISLSLLKISQTEVDYLYREKFHFLRLEPKRWVFHYFNLAMTVAVLTIFTRCCYRLAELVVGWDGYLITHEWYFIILDALMMAIATVTLTIFHPGFAFKGRSTSIPITPRHVDPETLPHTDDVEDILDTSDSKQFDIEKEEFQASMKYPISTFKQFMSKIANLFSSKKKAKL.

The Extracellular portion of the chain corresponds to 1–34 (MSNATNNTLGSLLPQLEAAANSNSLYGGMVPNLR). Asn-3 and Asn-6 each carry an N-linked (GlcNAc...) asparagine glycan. The helical transmembrane segment at 35–55 (FNITMIVIWGILLTIHVVQLL) threads the bilayer. Topologically, residues 56–57 (MR) are cytoplasmic. The chain crosses the membrane as a helical span at residues 58–78 (QYWFSIAFICTGILEVLGFIG). Residues 79–90 (RTWSHSNVADMD) lie on the Extracellular side of the membrane. Residues 91–111 (AFLLNMICLTIAPVFTMGGIY) traverse the membrane as a helical segment. At 112–135 (YQLAKLIEVYGHRFSLLPSPMAYS) the chain is on the cytoplasmic side. Residues 136–156 (FIFICSDIVSLVVQAVGGGLC) form a helical membrane-spanning segment. The Extracellular portion of the chain corresponds to 157 to 171 (GVAVTDGTSTTTGNH). The chain crosses the membrane as a helical span at residues 172-192 (VFIAGLAIQVASMAIFLMLWF). Over 193–241 (HFLFRIYISVRWEHINSRPISLSLLKISQTEVDYLYREKFHFLRLEPKR) the chain is Cytoplasmic. The chain crosses the membrane as a helical span at residues 242-262 (WVFHYFNLAMTVAVLTIFTRC). At 263 to 281 (CYRLAELVVGWDGYLITHE) the chain is on the extracellular side. A helical membrane pass occupies residues 282–302 (WYFIILDALMMAIATVTLTIF). Over 303–382 (HPGFAFKGRS…LFSSKKKAKL (80 aa)) the chain is Cytoplasmic.

The protein belongs to the lipid-translocating exporter (LTE) (TC 9.A.26.1) family.

It localises to the cell membrane. Functionally, catalyzes the ATP-dependent translocation of sphingoid long-chain bases (LCBs) from the cytoplasmic site toward the extracytoplasmic side of the membrane (flip-flop). Involved in the establishment of the functional lipid asymmetry of the plasma membrane. Regulates intracellular levels of LCBs, sphingolipid precursors that are growth inhibitory at increased levels. This is Sphingoid long-chain base transporter RSB1 (RSB1) from Saccharomyces cerevisiae (strain AWRI1631) (Baker's yeast).